Reading from the N-terminus, the 417-residue chain is Putative competence-damage inducible protein (417 aa).

It belongs to the CinA family.

The sequence is that of Putative competence-damage inducible protein from Oceanobacillus iheyensis (strain DSM 14371 / CIP 107618 / JCM 11309 / KCTC 3954 / HTE831).